The following is a 99-amino-acid chain: Malonate decarboxylase acyl carrier protein (99 aa).

The residue at position 25 (Ser25) is an O-(phosphoribosyl dephospho-coenzyme A)serine.

The protein belongs to the MdcC family. Covalently binds the prosthetic group of malonate decarboxylase.

The protein localises to the cytoplasm. Functionally, subunit of malonate decarboxylase, it is an acyl carrier protein to which acetyl and malonyl thioester residues are bound via a 2'-(5''-phosphoribosyl)-3'-dephospho-CoA prosthetic group and turn over during the catalytic mechanism. This is Malonate decarboxylase acyl carrier protein from Pseudomonas putida (Arthrobacter siderocapsulatus).